Consider the following 451-residue polypeptide: Bifunctional protein GlmU (451 aa).

The tract at residues 1–225 (MVVVAILAAG…YQEILGINDR (225 aa)) is pyrophosphorylase. UDP-N-acetyl-alpha-D-glucosamine-binding positions include 7–10 (LAAG), Lys-21, Gln-72, and 77–78 (GT). Asp-102 is a binding site for Mg(2+). The UDP-N-acetyl-alpha-D-glucosamine site is built by Gly-139, Glu-154, Asn-169, and Asn-223. Asn-223 serves as a coordination point for Mg(2+). The tract at residues 226 to 246 (LQLATAYEILQRRVKEQWMMA) is linker. Positions 247 to 451 (GVTLIDPNSI…LGWRRKSGES (205 aa)) are N-acetyltransferase. UDP-N-acetyl-alpha-D-glucosamine contacts are provided by Arg-328 and Lys-346. Catalysis depends on His-358, which acts as the Proton acceptor. Residues Tyr-361 and Asn-372 each coordinate UDP-N-acetyl-alpha-D-glucosamine. Acetyl-CoA-binding positions include Ala-375, 381 to 382 (NY), Ser-400, Ala-418, and Arg-435.

The protein in the N-terminal section; belongs to the N-acetylglucosamine-1-phosphate uridyltransferase family. This sequence in the C-terminal section; belongs to the transferase hexapeptide repeat family. As to quaternary structure, homotrimer. It depends on Mg(2+) as a cofactor.

The protein resides in the cytoplasm. It catalyses the reaction alpha-D-glucosamine 1-phosphate + acetyl-CoA = N-acetyl-alpha-D-glucosamine 1-phosphate + CoA + H(+). The enzyme catalyses N-acetyl-alpha-D-glucosamine 1-phosphate + UTP + H(+) = UDP-N-acetyl-alpha-D-glucosamine + diphosphate. It participates in nucleotide-sugar biosynthesis; UDP-N-acetyl-alpha-D-glucosamine biosynthesis; N-acetyl-alpha-D-glucosamine 1-phosphate from alpha-D-glucosamine 6-phosphate (route II): step 2/2. It functions in the pathway nucleotide-sugar biosynthesis; UDP-N-acetyl-alpha-D-glucosamine biosynthesis; UDP-N-acetyl-alpha-D-glucosamine from N-acetyl-alpha-D-glucosamine 1-phosphate: step 1/1. The protein operates within bacterial outer membrane biogenesis; LPS lipid A biosynthesis. Functionally, catalyzes the last two sequential reactions in the de novo biosynthetic pathway for UDP-N-acetylglucosamine (UDP-GlcNAc). The C-terminal domain catalyzes the transfer of acetyl group from acetyl coenzyme A to glucosamine-1-phosphate (GlcN-1-P) to produce N-acetylglucosamine-1-phosphate (GlcNAc-1-P), which is converted into UDP-GlcNAc by the transfer of uridine 5-monophosphate (from uridine 5-triphosphate), a reaction catalyzed by the N-terminal domain. In Nostoc sp. (strain PCC 7120 / SAG 25.82 / UTEX 2576), this protein is Bifunctional protein GlmU.